The following is a 402-amino-acid chain: Tyrosine--tRNA ligase (402 aa).

A 'HIGH' region motif is present at residues 47-56 (PTAPDLHLGH). The 'KMSKS' region motif lies at 232 to 236 (KMSKS). Lys-235 serves as a coordination point for ATP. The 61-residue stretch at 341-401 (VGILDVLKQI…GKKRFMKLNI (61 aa)) folds into the S4 RNA-binding domain.

Belongs to the class-I aminoacyl-tRNA synthetase family. TyrS type 2 subfamily. As to quaternary structure, homodimer.

It is found in the cytoplasm. The enzyme catalyses tRNA(Tyr) + L-tyrosine + ATP = L-tyrosyl-tRNA(Tyr) + AMP + diphosphate + H(+). In terms of biological role, catalyzes the attachment of tyrosine to tRNA(Tyr) in a two-step reaction: tyrosine is first activated by ATP to form Tyr-AMP and then transferred to the acceptor end of tRNA(Tyr). This Helicobacter pylori (strain ATCC 700392 / 26695) (Campylobacter pylori) protein is Tyrosine--tRNA ligase.